The sequence spans 2293 residues: Protein Ycf2 (2293 aa).

1642 to 1649 (GSIGTGRS) is an ATP binding site.

Belongs to the Ycf2 family.

It is found in the plastid. The protein resides in the chloroplast stroma. Probable ATPase of unknown function. Its presence in a non-photosynthetic plant (Epifagus virginiana) and experiments in tobacco indicate that it has an essential function which is probably not related to photosynthesis. The polypeptide is Protein Ycf2 (Platanus occidentalis (Sycamore)).